The sequence spans 455 residues: uncharacterized protein (455 aa).

Over residues 1–20 (MGCCLSKKPSPSLPSSVKPS) the composition is skewed to low complexity. 2 disordered regions span residues 1 to 234 (MGCC…IPAT) and 258 to 304 (RIAA…QNTK). 5 stretches are compositionally biased toward basic and acidic residues: residues 35–46 (EEAKPKSEKLNQ), 61–75 (SHEE…DKDS), 129–143 (RSFD…RGGD), 156–166 (RGVERVHGSPR), and 173–186 (PSRE…RERG). Over residues 213-224 (SCGSSVNSSNNR) the composition is skewed to polar residues. Low complexity predominate over residues 260-271 (AASPRSKSPARA).

This is an uncharacterized protein from Arabidopsis thaliana (Mouse-ear cress).